The primary structure comprises 99 residues: Signal recognition particle 19 kDa protein (99 aa).

Belongs to the SRP19 family. As to quaternary structure, part of the signal recognition particle protein translocation system, which is composed of SRP and FtsY. Archaeal SRP consists of a 7S RNA molecule of 300 nucleotides and two protein subunits: SRP54 and SRP19.

The protein localises to the cytoplasm. Functionally, involved in targeting and insertion of nascent membrane proteins into the cytoplasmic membrane. Binds directly to 7S RNA and mediates binding of the 54 kDa subunit of the SRP. In Pyrococcus abyssi (strain GE5 / Orsay), this protein is Signal recognition particle 19 kDa protein.